We begin with the raw amino-acid sequence, 349 residues long: Phosphoribosylformylglycinamidine cyclo-ligase (349 aa).

The protein belongs to the AIR synthase family.

The protein resides in the cytoplasm. The catalysed reaction is 2-formamido-N(1)-(5-O-phospho-beta-D-ribosyl)acetamidine + ATP = 5-amino-1-(5-phospho-beta-D-ribosyl)imidazole + ADP + phosphate + H(+). The protein operates within purine metabolism; IMP biosynthesis via de novo pathway; 5-amino-1-(5-phospho-D-ribosyl)imidazole from N(2)-formyl-N(1)-(5-phospho-D-ribosyl)glycinamide: step 2/2. In Methanococcus maripaludis (strain C5 / ATCC BAA-1333), this protein is Phosphoribosylformylglycinamidine cyclo-ligase.